Reading from the N-terminus, the 252-residue chain is Imidazole glycerol phosphate synthase subunit HisF (252 aa).

Residues aspartate 11 and aspartate 130 contribute to the active site.

It belongs to the HisA/HisF family. In terms of assembly, heterodimer of HisH and HisF.

The protein localises to the cytoplasm. The catalysed reaction is 5-[(5-phospho-1-deoxy-D-ribulos-1-ylimino)methylamino]-1-(5-phospho-beta-D-ribosyl)imidazole-4-carboxamide + L-glutamine = D-erythro-1-(imidazol-4-yl)glycerol 3-phosphate + 5-amino-1-(5-phospho-beta-D-ribosyl)imidazole-4-carboxamide + L-glutamate + H(+). It functions in the pathway amino-acid biosynthesis; L-histidine biosynthesis; L-histidine from 5-phospho-alpha-D-ribose 1-diphosphate: step 5/9. In terms of biological role, IGPS catalyzes the conversion of PRFAR and glutamine to IGP, AICAR and glutamate. The HisF subunit catalyzes the cyclization activity that produces IGP and AICAR from PRFAR using the ammonia provided by the HisH subunit. The sequence is that of Imidazole glycerol phosphate synthase subunit HisF from Bacillus cereus (strain ZK / E33L).